Consider the following 110-residue polypeptide: Large ribosomal subunit protein uL22 (110 aa).

Belongs to the universal ribosomal protein uL22 family. As to quaternary structure, part of the 50S ribosomal subunit.

In terms of biological role, this protein binds specifically to 23S rRNA; its binding is stimulated by other ribosomal proteins, e.g. L4, L17, and L20. It is important during the early stages of 50S assembly. It makes multiple contacts with different domains of the 23S rRNA in the assembled 50S subunit and ribosome. Functionally, the globular domain of the protein is located near the polypeptide exit tunnel on the outside of the subunit, while an extended beta-hairpin is found that lines the wall of the exit tunnel in the center of the 70S ribosome. The polypeptide is Large ribosomal subunit protein uL22 (Aliarcobacter butzleri (strain RM4018) (Arcobacter butzleri)).